Consider the following 859-residue polypeptide: ATP-dependent DNA helicase PIF1 (859 aa).

The transit peptide at 1–45 (MPKWIRSTLNHIIPRRPFICSFNSFLLLKNVSHAKLSFSMSSRGF) directs the protein to the mitochondrion. 2 positions are modified to phosphoserine: serine 70 and serine 72. A compositionally biased stretch (polar residues) spans 142–157 (NSFDQSSQKKSRSTGF). The segment at 142 to 183 (NSFDQSSQKKSRSTGFKNPLRPALKKESSFDELQNSSISQER) is disordered. Serine 169 carries the phosphoserine modification. Polar residues predominate over residues 172–182 (DELQNSSISQE). 258 to 265 (GSAGTGKS) provides a ligand contact to ATP. Position 584 is a phosphoserine (serine 584). A DNA-binding region spans residues 727 to 746 (QAYVALSRAVSREGLQVLNF). A disordered region spans residues 782-859 (KRKLDYAPGP…GQDTEDHILE (78 aa)). Residues 800–809 (KSNSPAPISA) show a composition bias toward low complexity. Basic and acidic residues predominate over residues 844-859 (VSDEPRGQDTEDHILE).

This sequence belongs to the helicase family. PIF1 subfamily. As to quaternary structure, monomer in solution. DNA binding induces dimerization. Associates with mitochondrial and telomeric DNA. Binding to mtDNA is non-specific and the protein seems to coat the entire mtDNA molecule. Binds to the telomerase RNA TLC1. Interacts with the mitochondrial single-strand DNA-binding protein RIM1. The cofactor is Mg(2+). It depends on Mn(2+) as a cofactor. In terms of processing, phosphorylated. Undergoes RAD53-dependent phosphorylation in response to loss of mtDNA.

The protein localises to the nucleus. The protein resides in the nucleolus. It is found in the mitochondrion inner membrane. The enzyme catalyses Couples ATP hydrolysis with the unwinding of duplex DNA at the replication fork by translocating in the 5'-3' direction. This creates two antiparallel DNA single strands (ssDNA). The leading ssDNA polymer is the template for DNA polymerase III holoenzyme which synthesizes a continuous strand.. It catalyses the reaction ATP + H2O = ADP + phosphate + H(+). Its function is as follows. DNA-dependent ATPase and 5'-3' DNA helicase required for the maintenance of both mitochondrial and nuclear genome stability. Efficiently unwinds G-quadruplex (G4) DNA structures and forked RNA-DNA hybrids. Appears to move along DNA in single nucleotide or base pair steps, powered by hydrolysis of 1 molecule of ATP. Processes at an unwinding rate of about 75 bp/s. Resolves G4 structures, preventing replication pausing and double-strand breaks (DSBs) at G4 motifs. Involved in the maintenance of telomeric DNA. Inhibits telomere elongation, de novo telomere formation and telomere addition to DSBs via catalytic inhibition of telomerase. Reduces the processivity of telomerase by displacing active telomerase from DNA ends. Releases telomerase by unwinding the short telomerase RNA/telomeric DNA hybrid that is the intermediate in the telomerase reaction. Involved in the maintenance of ribosomal (rDNA). Required for efficient fork arrest at the replication fork barrier within rDNA. Involved in the maintenance of mitochondrial (mtDNA). Required to maintain mtDNA under conditions that introduce dsDNA breaks in mtDNA, either preventing or repairing dsDNA breaks. May inhibit replication progression to allow time for repair. May have a general role in chromosomal replication by affecting Okazaki fragment maturation. May have a role in conjunction with DNA2 helicase/nuclease in 5'-flap extension during Okazaki fragment processing. The sequence is that of ATP-dependent DNA helicase PIF1 from Saccharomyces cerevisiae (strain YJM789) (Baker's yeast).